Reading from the N-terminus, the 74-residue chain is Acyl carrier protein (74 aa).

In terms of domain architecture, Carrier spans 1–73; sequence MAVFEKVQEI…DLVAYVEEKS (73 aa). Position 35 is an O-(pantetheine 4'-phosphoryl)serine (S35).

It belongs to the acyl carrier protein (ACP) family. 4'-phosphopantetheine is transferred from CoA to a specific serine of apo-ACP by AcpS. This modification is essential for activity because fatty acids are bound in thioester linkage to the sulfhydryl of the prosthetic group.

It is found in the cytoplasm. Its pathway is lipid metabolism; fatty acid biosynthesis. Its function is as follows. Carrier of the growing fatty acid chain in fatty acid biosynthesis. This chain is Acyl carrier protein, found in Streptococcus pyogenes serotype M1.